Reading from the N-terminus, the 303-residue chain is MNKQNLINQFAQLITEQPNPRSVNLDQMSALEIVQLMNKEDQQVPLVIAKALPEIAVVVEKIVAAFRQGGRLVYLGAGTSGRLGVLDASECPPTFGVNHEMVKGIIAGGEQAIRYPVEGAEDNQQAAIVDLQAIQLCSKDILVGIAASGRTPYVISGLKYAKEIGSFTVAIASNPQSAMAKIADMSIETIVGPEILTGSSRLKSGTAQKLVLNMLTTASMVLLGKCYQNFMVDVQASNEKLVDRATRIIMQATGCERAKAEQTLTQADNNAKLAILMILMDLDKQSAVDLLAKNQDKLRQTLD.

In terms of domain architecture, SIS spans I62–K225. E90 (proton donor) is an active-site residue. E121 is a catalytic residue.

The protein belongs to the GCKR-like family. MurNAc-6-P etherase subfamily. In terms of assembly, homodimer.

It carries out the reaction N-acetyl-D-muramate 6-phosphate + H2O = N-acetyl-D-glucosamine 6-phosphate + (R)-lactate. Its pathway is amino-sugar metabolism; 1,6-anhydro-N-acetylmuramate degradation. It functions in the pathway amino-sugar metabolism; N-acetylmuramate degradation. It participates in cell wall biogenesis; peptidoglycan recycling. In terms of biological role, specifically catalyzes the cleavage of the D-lactyl ether substituent of MurNAc 6-phosphate, producing GlcNAc 6-phosphate and D-lactate. Together with AnmK, is also required for the utilization of anhydro-N-acetylmuramic acid (anhMurNAc) either imported from the medium or derived from its own cell wall murein, and thus plays a role in cell wall recycling. This Histophilus somni (strain 129Pt) (Haemophilus somnus) protein is N-acetylmuramic acid 6-phosphate etherase.